A 208-amino-acid chain; its full sequence is ATP phosphoribosyltransferase (208 aa).

This sequence belongs to the ATP phosphoribosyltransferase family. Short subfamily. As to quaternary structure, heteromultimer composed of HisG and HisZ subunits.

The protein localises to the cytoplasm. It carries out the reaction 1-(5-phospho-beta-D-ribosyl)-ATP + diphosphate = 5-phospho-alpha-D-ribose 1-diphosphate + ATP. It participates in amino-acid biosynthesis; L-histidine biosynthesis; L-histidine from 5-phospho-alpha-D-ribose 1-diphosphate: step 1/9. Functionally, catalyzes the condensation of ATP and 5-phosphoribose 1-diphosphate to form N'-(5'-phosphoribosyl)-ATP (PR-ATP). Has a crucial role in the pathway because the rate of histidine biosynthesis seems to be controlled primarily by regulation of HisG enzymatic activity. The polypeptide is ATP phosphoribosyltransferase (Thermotoga neapolitana (strain ATCC 49049 / DSM 4359 / NBRC 107923 / NS-E)).